The following is a 1203-amino-acid chain: uncharacterized protein (1203 aa).

This is an uncharacterized protein from Magallana gigas (Pacific oyster).